The chain runs to 600 residues: ATP-dependent ubiquitin transferase-like protein Cap2 (600 aa).

The tract at residues 1–158 is E2-like domain; that stretch reads MSTVVQQVPA…QEKLATTGDA (158 aa). The active-site For E2-like domain is Cys-109. The interval 159–373 is linker domain; that stretch reads VELPAFPDQS…DQLRTRGEAA (215 aa). The interval 375–600 is adenylation plus E1-like domain; that stretch reads DIRSKKVLII…GTVEKEPHEY (226 aa). Cys-548 acts as the For E1-like domain in catalysis.

This sequence in the C-terminal section; belongs to the HesA/MoeB/ThiF family. Crystallizes as a Cap2 homodimer bound on each side by a CdnD monomer.

Its function is as follows. CD-NTase priming component of a CBASS antiviral system. CBASS (cyclic oligonucleotide-based antiphage signaling system) provides immunity against bacteriophages. The CD-NTase protein (CdnD) synthesizes cyclic nucleotides in response to infection; these serve as specific second messenger signals. The signals activate a diverse range of effectors, leading to bacterial cell death and thus abortive phage infection. A type II-C(AAG) CBASS system. Primes CdnD; acts as a protein transferase, conjugating CdnD, the CD-NTase, to unidentified target(s) in the cell via an E1-E2 ubiquitin transferase-like mechanism. Upon phage infection CdnD activates and makes cyclic nucleotides. During the conjugation reaction CdnD is transiently attached to AMP. Protein conjugation requires ATP. Functionally, protects E.coli against phage T2 infection. When the cdnD-cap2-cap3-cap4 operon is introduced in E.coli there is a more than 10(3) decrease in the efficiency of T2 plaque formation. The operon does not protect against phage T5 and only about 10-fold against T7. The sequence is that of ATP-dependent ubiquitin transferase-like protein Cap2 from Enterobacter hormaechei subsp. hoffmannii (strain UCI 50).